The following is a 956-amino-acid chain: Ubiquitin carboxyl-terminal hydrolase CYLD (956 aa).

Positions 106-593 (CEERFSLFKN…LEIMIGKKKG (488 aa)) are interaction with TRIP. CAP-Gly domains are found at residues 153–198 (LAER…VFVA) and 253–286 (DVLPGKESLGYFVGVDMDNPIGNWDGRFDGVQLC). The disordered stretch occupies residues 309 to 353 (SVTQERRPPKLAFMSRGVGDKGSSSHNKPKATGSTSDPGNRNRSE). Residues 330–349 (GSSSHNKPKATGSTSDPGNR) show a composition bias toward polar residues. The residue at position 387 (Ser387) is a Phosphoserine. A disordered region spans residues 392–411 (STDFDRSSPPLQPPPVNSLS). Residues 394–469 (DFDRSSPPLQ…LAMPPGNSHG (76 aa)) form an interaction with TRAF2 region. Ser418 and Ser422 each carry phosphoserine. Positions 470 to 684 (LEVGSLAEVK…FTSEEKDPEE (215 aa)) are interaction with IKBKG/NEMO. The CAP-Gly 3 domain maps to 492 to 535 (GQPPGLNEVLAGLELEDECAGCTDGTFRGTRYFTCALKKALFVK). Residues 592-950 (KGIQGHYNSC…DAYMCMYQSP (359 aa)) form the USP domain. The active-site Nucleophile is Cys601. Positions 781–833 (LEDTPRQCRICGGLAMYECRECYDDPDISAGKIKQFCKTCNTQVHLHPKRLNH) are B-box. Zn(2+) is bound by residues Cys788, Cys791, Cys799, Cys802, Cys817, Cys820, His825, and His833. The active-site Proton acceptor is the His871.

This sequence belongs to the peptidase C19 family. In terms of assembly, interacts (via CAP-Gly domain) with IKBKG/NEMO (via proline-rich C-terminal region). Interacts with TRAF2 and TRIP. Interacts with PLK1, DVL1, DVL3, MAVS, TBK1, IKKE and RIGI. Interacts (via CAP-Gly domain) with microtubules. Interacts with HDAC6 and BCL3. Interacts with MAP3K7. Identified in a complex with TRAF6 and SQSTM1. Interacts with OPTN and SQSTM1. Interacts with CEP350. Interacts with RNF31; the interaction is indirect and is mediated via SPATA2. Interacts with SPATA2 (via the PUB domain); the interaction is direct and recruits CYLD to the LUBAC complex, thereby regulating TNF-alpha-induced necroptosis. Post-translationally, phosphorylated on several serine residues by IKKA and/or IKKB in response to immune stimuli. Phosphorylation requires IKBKG. Phosphorylation abolishes TRAF2 deubiquitination, interferes with the activation of Jun kinases, and strongly reduces CD40-dependent gene activation by NF-kappa-B. In terms of processing, ubiquitinated. Polyubiquitinated in hepatocytes treated with palmitic acid. Ubiquitination is mediated by E3 ligase TRIM47 and leads to proteasomal degradation.

Its subcellular location is the cytoplasm. It localises to the perinuclear region. It is found in the cytoskeleton. The protein localises to the cell membrane. The protein resides in the microtubule organizing center. Its subcellular location is the centrosome. It localises to the spindle. It is found in the cilium basal body. It catalyses the reaction Thiol-dependent hydrolysis of ester, thioester, amide, peptide and isopeptide bonds formed by the C-terminal Gly of ubiquitin (a 76-residue protein attached to proteins as an intracellular targeting signal).. In terms of biological role, deubiquitinase that specifically cleaves 'Lys-63'- and linear 'Met-1'-linked polyubiquitin chains and is involved in NF-kappa-B activation and TNF-alpha-induced necroptosis. Negatively regulates NF-kappa-B activation by deubiquitinating upstream signaling factors. Contributes to the regulation of cell survival, proliferation and differentiation via its effects on NF-kappa-B activation. Negative regulator of Wnt signaling. Inhibits HDAC6 and thereby promotes acetylation of alpha-tubulin and stabilization of microtubules. Plays a role in the regulation of microtubule dynamics, and thereby contributes to the regulation of cell proliferation, cell polarization, cell migration, and angiogenesis. Required for normal cell cycle progress and normal cytokinesis. Inhibits nuclear translocation of NF-kappa-B. Plays a role in the regulation of inflammation and the innate immune response, via its effects on NF-kappa-B activation. Dispensable for the maturation of intrathymic natural killer cells, but required for the continued survival of immature natural killer cells. Negatively regulates TNFRSF11A signaling and osteoclastogenesis. Involved in the regulation of ciliogenesis, allowing ciliary basal bodies to migrate and dock to the plasma membrane; this process does not depend on NF-kappa-B activation. Ability to remove linear ('Met-1'-linked) polyubiquitin chains regulates innate immunity and TNF-alpha-induced necroptosis: recruited to the LUBAC complex via interaction with SPATA2 and restricts linear polyubiquitin formation on target proteins. Regulates innate immunity by restricting linear polyubiquitin formation on RIPK2 in response to NOD2 stimulation. Involved in TNF-alpha-induced necroptosis by removing linear ('Met-1'-linked) polyubiquitin chains from RIPK1, thereby regulating the kinase activity of RIPK1. Negatively regulates intestinal inflammation by removing 'Lys-63' linked polyubiquitin chain of NLRP6, thereby reducing the interaction between NLRP6 and PYCARD/ASC and formation of the NLRP6 inflammasome. Does not catalyze deubiquitination of heterotypic 'Lys-63'-/'Lys-48'-linked branched ubiquitin chains. Removes 'Lys-63' linked polyubiquitin chain of MAP3K7, which inhibits phosphorylation and blocks downstream activation of the JNK-p38 kinase cascades. Also removes 'Lys-63'-linked polyubiquitin chains of MAP3K1 and MA3P3K3, which inhibit their interaction with MAP2K1 and MAP2K2. The chain is Ubiquitin carboxyl-terminal hydrolase CYLD (CYLD) from Pongo abelii (Sumatran orangutan).